The primary structure comprises 211 residues: Thiamine-phosphate synthase (211 aa).

4-amino-2-methyl-5-(diphosphooxymethyl)pyrimidine-binding positions include 44–48 and N75; that span reads QYRNK. Mg(2+)-binding residues include D76 and D95. A 4-amino-2-methyl-5-(diphosphooxymethyl)pyrimidine-binding site is contributed by S114. 140 to 142 is a binding site for 2-[(2R,5Z)-2-carboxy-4-methylthiazol-5(2H)-ylidene]ethyl phosphate; sequence TKS. K143 provides a ligand contact to 4-amino-2-methyl-5-(diphosphooxymethyl)pyrimidine. Position 171 (G171) interacts with 2-[(2R,5Z)-2-carboxy-4-methylthiazol-5(2H)-ylidene]ethyl phosphate.

It belongs to the thiamine-phosphate synthase family. It depends on Mg(2+) as a cofactor.

The enzyme catalyses 2-[(2R,5Z)-2-carboxy-4-methylthiazol-5(2H)-ylidene]ethyl phosphate + 4-amino-2-methyl-5-(diphosphooxymethyl)pyrimidine + 2 H(+) = thiamine phosphate + CO2 + diphosphate. It carries out the reaction 2-(2-carboxy-4-methylthiazol-5-yl)ethyl phosphate + 4-amino-2-methyl-5-(diphosphooxymethyl)pyrimidine + 2 H(+) = thiamine phosphate + CO2 + diphosphate. The catalysed reaction is 4-methyl-5-(2-phosphooxyethyl)-thiazole + 4-amino-2-methyl-5-(diphosphooxymethyl)pyrimidine + H(+) = thiamine phosphate + diphosphate. It functions in the pathway cofactor biosynthesis; thiamine diphosphate biosynthesis; thiamine phosphate from 4-amino-2-methyl-5-diphosphomethylpyrimidine and 4-methyl-5-(2-phosphoethyl)-thiazole: step 1/1. Condenses 4-methyl-5-(beta-hydroxyethyl)thiazole monophosphate (THZ-P) and 2-methyl-4-amino-5-hydroxymethyl pyrimidine pyrophosphate (HMP-PP) to form thiamine monophosphate (TMP). The polypeptide is Thiamine-phosphate synthase (Koribacter versatilis (strain Ellin345)).